The chain runs to 255 residues: MKTIAVNSFKGGTAKTSTTLHLGAALAQYHKARVLLIDFDAQANLTAGLGLDPDCYDSLAVVLQGEKNIEEVIRPIDSSGLDLIPADTWLERVEVSGSLAADRYSHERLKIILSKIEHRYDYVIIDTPPSLCWLTESALIAAQHALICATPEFYSVKGLERLATFIQGISSRHPLNILGVTLSFWNYRGKNNAAFTELIQKTFPGKLLNTRIRRDITISEAAIHGKPVFSTAPSARASEDYLKLTEELLFLLRNI.

This sequence belongs to the ParA family.

The polypeptide is ParA family protein CT_582 (Chlamydia trachomatis serovar D (strain ATCC VR-885 / DSM 19411 / UW-3/Cx)).